The chain runs to 933 residues: 2-oxoglutarate dehydrogenase E1 component (933 aa).

Belongs to the alpha-ketoglutarate dehydrogenase family. In terms of assembly, homodimer. Part of the 2-oxoglutarate dehydrogenase (OGDH) complex composed of E1 (2-oxoglutarate dehydrogenase), E2 (dihydrolipoamide succinyltransferase) and E3 (dihydrolipoamide dehydrogenase); the complex contains multiple copies of the three enzymatic components (E1, E2 and E3). Requires thiamine diphosphate as cofactor.

It carries out the reaction N(6)-[(R)-lipoyl]-L-lysyl-[protein] + 2-oxoglutarate + H(+) = N(6)-[(R)-S(8)-succinyldihydrolipoyl]-L-lysyl-[protein] + CO2. Functionally, E1 component of the 2-oxoglutarate dehydrogenase (OGDH) complex which catalyzes the decarboxylation of 2-oxoglutarate, the first step in the conversion of 2-oxoglutarate to succinyl-CoA and CO(2). This is 2-oxoglutarate dehydrogenase E1 component (sucA) from Rickettsia typhi (strain ATCC VR-144 / Wilmington).